The sequence spans 119 residues: NADH-quinone oxidoreductase subunit A (119 aa).

3 helical membrane passes run 7–27 (FPVLLFIIIGVGLGLALMTIG), 63–83 (LIAILFILFDLETAFLFPWGV), and 88–108 (IGWPGFFAMGVFLLEFLVGFV).

It belongs to the complex I subunit 3 family. In terms of assembly, NDH-1 is composed of 14 different subunits. Subunits NuoA, H, J, K, L, M, N constitute the membrane sector of the complex.

The protein localises to the cell inner membrane. It carries out the reaction a quinone + NADH + 5 H(+)(in) = a quinol + NAD(+) + 4 H(+)(out). NDH-1 shuttles electrons from NADH, via FMN and iron-sulfur (Fe-S) centers, to quinones in the respiratory chain. The immediate electron acceptor for the enzyme in this species is believed to be ubiquinone. Couples the redox reaction to proton translocation (for every two electrons transferred, four hydrogen ions are translocated across the cytoplasmic membrane), and thus conserves the redox energy in a proton gradient. The sequence is that of NADH-quinone oxidoreductase subunit A from Ralstonia nicotianae (strain ATCC BAA-1114 / GMI1000) (Ralstonia solanacearum).